The primary structure comprises 198 residues: Peroxiredoxin-2 (198 aa).

N-acetylalanine is present on A2. A Thioredoxin domain is found at 6–164; sequence ARIGKPAPDF…ALRLVQAFQY (159 aa). The active-site Cysteine sulfenic acid (-SOH) intermediate is C51. Position 112 is a phosphoserine (S112). T182 is subject to Phosphothreonine. K196 carries the post-translational modification N6-acetyllysine.

The protein belongs to the peroxiredoxin family. AhpC/Prx1 subfamily. Homodimer; disulfide-linked, upon oxidation. 5 homodimers assemble to form a ring-like decamer. Interacts with TIPIN. The enzyme can be inactivated by further oxidation of the cysteine sulfenic acid (C(P)-SOH) to sulphinic acid (C(P)-SO2H) instead of its condensation to a disulfide bond. It can be reactivated by forming a transient disulfide bond with sulfiredoxin SRXN1, which reduces the cysteine sulfinic acid in an ATP- and Mg-dependent manner. Post-translationally, acetylation increases resistance to transition to high molecular-mass complexes. Deacetylated by HDAC6 which decreases reducing activity.

It is found in the cytoplasm. It carries out the reaction a hydroperoxide + [thioredoxin]-dithiol = an alcohol + [thioredoxin]-disulfide + H2O. Its function is as follows. Thiol-specific peroxidase that catalyzes the reduction of hydrogen peroxide and organic hydroperoxides to water and alcohols, respectively. Plays a role in cell protection against oxidative stress by detoxifying peroxides and as sensor of hydrogen peroxide-mediated signaling events. Might participate in the signaling cascades of growth factors and tumor necrosis factor-alpha by regulating the intracellular concentrations of H(2)O(2). The chain is Peroxiredoxin-2 (PRDX2) from Macaca fascicularis (Crab-eating macaque).